The primary structure comprises 185 residues: Ribosome-recycling factor (185 aa).

The protein belongs to the RRF family.

It localises to the cytoplasm. Functionally, responsible for the release of ribosomes from messenger RNA at the termination of protein biosynthesis. May increase the efficiency of translation by recycling ribosomes from one round of translation to another. In Idiomarina loihiensis (strain ATCC BAA-735 / DSM 15497 / L2-TR), this protein is Ribosome-recycling factor.